Reading from the N-terminus, the 246-residue chain is Sugar fermentation stimulation protein homolog (246 aa).

This sequence belongs to the SfsA family.

The polypeptide is Sugar fermentation stimulation protein homolog (Prochlorococcus marinus (strain MIT 9215)).